The primary structure comprises 266 residues: Gasdermin bGSDM (266 aa).

The S-palmitoyl cysteine moiety is linked to residue cysteine 4. A run of 4 beta stranded transmembrane segments spans residues 69–85 (INGQ…GINI), 97–114 (AGIE…FEFS), 163–180 (EFTV…QLDV), and 189–205 (GKLK…TVTY). The interval 238–266 (AMALDAAGGVMPSDSALLDEGGLLDLEGF) is C-terminal region.

The protein belongs to the bacterial gasdermin family. As to quaternary structure, monomer in solution. In terms of assembly, homooligomer; forms homooligomeric ring-shaped pores when inserted in membranes with 48-54 subunits per ring. In terms of processing, palmitoylation helps stabilize the inactive state; may self palmitoylate. Palmitoylation plays a significant role in pore formation.

It localises to the cytoplasm. The protein resides in the cell inner membrane. With respect to regulation, the full-length protein before cleavage is inactive: intramolecular interactions between the N-terminal domain and the C-terminal region as well as the lipid modification, mediate autoinhibition. The pyroptosis-like-inducing activity is carried by the released N-terminal domain (Gasdermin bGSDM, N-terminus). Functionally, precursor of a pore-forming protein involved in defense against bacteriophages. Expression of bGSDM and the neighboring protease gene (Ga0334635_1659) is toxic in E.coli. Cleavage of this precursor by its dedicated protease releases the active moiety (gasdermin bGSDM, N-terminus) which inserts into membranes, forming pores and triggering cell death. In terms of biological role, pore-forming protein that causes membrane permeabilization, probably via a pyroptosis-like activity. Makes ring-like pores with an interior pore diameter of 200-300 Angstroms, when integrated in liposomes. The polypeptide is Gasdermin bGSDM (Vitiosangium sp. (strain GDMCC 1.1324)).